A 300-amino-acid chain; its full sequence is Ribosome-inactivating protein 3 (300 aa).

Glu207 is a catalytic residue.

The protein belongs to the ribosome-inactivating protein family. Type 1 RIP subfamily. In terms of assembly, monomer. As to expression, accumulates to high levels in seeds.

The protein resides in the cytoplasm. It catalyses the reaction Endohydrolysis of the N-glycosidic bond at one specific adenosine on the 28S rRNA.. In terms of biological role, possesses features of some constitutive defense agent. The coordinate Opaque-2-controlled synthesis of this protein and the major seed storage proteins (zeins) may provide the germinating seedling with both nutritional benefits and protection against pathogen invasion of the surrounding endosperm. The polypeptide is Ribosome-inactivating protein 3 (CRIP3) (Zea mays (Maize)).